The following is a 176-amino-acid chain: Adenine phosphoribosyltransferase (176 aa).

This sequence belongs to the purine/pyrimidine phosphoribosyltransferase family. Homodimer.

Its subcellular location is the cytoplasm. The enzyme catalyses AMP + diphosphate = 5-phospho-alpha-D-ribose 1-diphosphate + adenine. It participates in purine metabolism; AMP biosynthesis via salvage pathway; AMP from adenine: step 1/1. In terms of biological role, catalyzes a salvage reaction resulting in the formation of AMP, that is energically less costly than de novo synthesis. The sequence is that of Adenine phosphoribosyltransferase from Bacteroides thetaiotaomicron (strain ATCC 29148 / DSM 2079 / JCM 5827 / CCUG 10774 / NCTC 10582 / VPI-5482 / E50).